A 207-amino-acid chain; its full sequence is Large ribosomal subunit protein uL4 (207 aa).

The segment at 48-86 (THKVKNRSEVRGGGRKPWRQKGTGRARQGSIRSPQWRGG) is disordered. Over residues 60–71 (GGRKPWRQKGTG) the composition is skewed to basic residues.

The protein belongs to the universal ribosomal protein uL4 family. As to quaternary structure, part of the 50S ribosomal subunit.

One of the primary rRNA binding proteins, this protein initially binds near the 5'-end of the 23S rRNA. It is important during the early stages of 50S assembly. It makes multiple contacts with different domains of the 23S rRNA in the assembled 50S subunit and ribosome. Functionally, forms part of the polypeptide exit tunnel. This Bacillus licheniformis (strain ATCC 14580 / DSM 13 / JCM 2505 / CCUG 7422 / NBRC 12200 / NCIMB 9375 / NCTC 10341 / NRRL NRS-1264 / Gibson 46) protein is Large ribosomal subunit protein uL4.